Reading from the N-terminus, the 354-residue chain is Deoxyribonuclease-2-beta (354 aa).

The signal sequence occupies residues 1 to 22 (MTAKPLRTVLSLLFFALSGVLG). N-linked (GlcNAc...) asparagine glycans are attached at residues asparagine 70, asparagine 77, asparagine 95, asparagine 98, asparagine 114, asparagine 129, asparagine 208, asparagine 271, and asparagine 319.

This sequence belongs to the DNase II family. Highly expressed in the eye lens. Detected in liver, but not in the other tissues tested.

It localises to the lysosome. It catalyses the reaction Endonucleolytic cleavage to nucleoside 3'-phosphates and 3'-phosphooligonucleotide end-products.. Functionally, hydrolyzes DNA under acidic conditions. Does not require divalent cations for activity. Participates in the degradation of nuclear DNA during lens cell differentiation. The protein is Deoxyribonuclease-2-beta (Dnase2b) of Mus musculus (Mouse).